The primary structure comprises 207 residues: Guanylate kinase (207 aa).

The 181-residue stretch at 4-184 (GTLYIVSAPS…ALADLHTIIR (181 aa)) folds into the Guanylate kinase-like domain. Residue 11–18 (APSGAGKS) coordinates ATP.

Belongs to the guanylate kinase family.

It localises to the cytoplasm. The enzyme catalyses GMP + ATP = GDP + ADP. Functionally, essential for recycling GMP and indirectly, cGMP. This is Guanylate kinase from Photorhabdus laumondii subsp. laumondii (strain DSM 15139 / CIP 105565 / TT01) (Photorhabdus luminescens subsp. laumondii).